Reading from the N-terminus, the 103-residue chain is U6 snRNA-associated Sm-like protein LSm7 (103 aa).

Position 2 is an N-acetylalanine (Ala2). The Sm domain maps to Glu10–Met90.

This sequence belongs to the snRNP Sm proteins family. As to quaternary structure, component of the precatalytic spliceosome (spliceosome B complex). Component of the U4/U6-U5 tri-snRNP complex, a building block of the precatalytic spliceosome (spliceosome B complex). The U4/U6-U5 tri-snRNP complex is composed of the U4, U6 and U5 snRNAs and at least PRPF3, PRPF4, PRPF6, PRPF8, PRPF31, SNRNP200, TXNL4A, SNRNP40, SNRPB, SNRPD1, SNRPD2, SNRPD3, SNRPE, SNRPF, SNRPG, DDX23, CD2BP2, PPIH, SNU13, EFTUD2, SART1 and USP39, plus LSM2, LSM3, LSM4, LSM5, LSM6, LSM7 and LSM8. LSM2, LSM3, LSM4, LSM5, LSM6, LSM7 and LSM8 form a heptameric, ring-shaped subcomplex (the LSM2-8 complex) that is part of the U4/U6-U5 tri-snRNP complex and the precatalytic spliceosome. Interacts with TACC1.

The protein resides in the nucleus. Its function is as follows. Plays a role in pre-mRNA splicing as component of the U4/U6-U5 tri-snRNP complex that is involved in spliceosome assembly, and as component of the precatalytic spliceosome (spliceosome B complex). The heptameric LSM2-8 complex binds specifically to the 3'-terminal U-tract of U6 snRNA. The polypeptide is U6 snRNA-associated Sm-like protein LSm7 (LSM7) (Homo sapiens (Human)).